A 435-amino-acid polypeptide reads, in one-letter code: Probable xyloglucan galactosyltransferase GT19 (435 aa).

Over Met-1–Thr-6 the chain is Cytoplasmic. The helical; Signal-anchor for type II membrane protein transmembrane segment at Val-7 to Pro-23 threads the bilayer. The Lumenal portion of the chain corresponds to Lys-24–Val-435. 3 N-linked (GlcNAc...) asparagine glycosylation sites follow: Asn-140, Asn-203, and Asn-277.

This sequence belongs to the glycosyltransferase 47 family. Expressed in roots, hypocotyls, cotyledons, leaves, stems, stamens and pollen grains.

It is found in the golgi apparatus membrane. In terms of biological role, functions in xyloglucan synthesis by adding side chains to the xylosylated glucan backbone. Involved in the galactosylation of hemicellulose xyloglucan. This chain is Probable xyloglucan galactosyltransferase GT19, found in Arabidopsis thaliana (Mouse-ear cress).